Here is a 430-residue protein sequence, read N- to C-terminus: DD-carboxypeptidase/endopeptidase Mpg (430 aa).

Residues H295, D299, and H375 each coordinate Zn(2+).

It belongs to the peptidase M23B family. Monomer. Zn(2+) serves as cofactor. In terms of processing, likely to be synthesized as a proenzyme. The cleavage of the N-terminal domain is probably required for the activation of the enzyme.

Its subcellular location is the cell outer membrane. In terms of biological role, has both endopeptidase and DD-carboxypeptidase activities. Degrades cell wall peptidoglycan (PG) to allow consummate expression of pili. The sequence is that of DD-carboxypeptidase/endopeptidase Mpg from Neisseria meningitidis serogroup B (strain ATCC 13091 / M2091).